A 550-amino-acid chain; its full sequence is Pectinesterase 2.2 (550 aa).

N-linked (GlcNAc...) asparagine glycosylation occurs at Asn179. Residues Thr312 and Gln342 each coordinate substrate. Cys331 and Cys358 are disulfide-bonded. Asp365 acts as the Proton donor in catalysis. Asp386 (nucleophile) is an active-site residue. Cys399 and Cys433 form a disulfide bridge. Substrate is bound by residues Arg454 and Trp456.

It in the N-terminal section; belongs to the PMEI family. In the C-terminal section; belongs to the pectinesterase family.

The protein resides in the secreted. It is found in the cell wall. The catalysed reaction is [(1-&gt;4)-alpha-D-galacturonosyl methyl ester](n) + n H2O = [(1-&gt;4)-alpha-D-galacturonosyl](n) + n methanol + n H(+). It functions in the pathway glycan metabolism; pectin degradation; 2-dehydro-3-deoxy-D-gluconate from pectin: step 1/5. Functionally, pectinesterase may play a role in cell wall metabolism during fruit growth and development prior to ripening and may be required for preparing cell walls for softening by polygalacturonase during fruit ripening. The protein is Pectinesterase 2.2 (PME2.2) of Solanum lycopersicum (Tomato).